A 113-amino-acid polypeptide reads, in one-letter code: Protein ORF3 (113 aa).

Hydrophobic regions lie at residues 1–21 (MGSPCALGLFCCCSSCFCLCC) and 32–52 (AVVGGATAVPAVVSGVTGLIL). The segment at 27-67 (ASRLAAVVGGATAVPAVVSGVTGLILSPSPSPIFIQPTPSL) is interaction with host HPX. Residues 47-71 (VTGLILSPSPSPIFIQPTPSLPMSF) are interaction with the capsid protein. Ser70 carries the phosphoserine; by host modification. The homodimerization, and interaction with host AMBP/bikunin stretch occupies residues 71 to 113 (FHNPGLELALDSRPAPLAPLGVTSPSAPPLPPVVDLPQLGLRR). Residues 89-113 (PLGVTSPSAPPLPPVVDLPQLGLRR) form a disordered region. Residues 94 to 103 (SPSAPPLPPV) form an interaction with host SRC, HCK, FYN, PIK3R3 and GRB2 region. Residues 95–98 (PSAP) carry the PTAP/PSAP motif motif.

It belongs to the hepevirus ORF3 protein family. Forms homooligomers. Interacts with host SRC, HCK, FYN, PIK3R3 and GRB2 (via SH3 domain); binding does not activate the kinases. Interacts with host AMBP/bikunin and AMBP/alpha-1-microglobulin peptides. Interacts with host HPX/hemopexin. Interacts (when phosphorylated) with capsid protein ORF2. Interacts with host TSG101; this interaction plays a role in viral release from the host cell. Interacts with host SIRPA; this interaction down-regulates the phosphorylation of host IRF3. In terms of processing, palmitoylated in the N-terminus.

It localises to the host endoplasmic reticulum membrane. Its subcellular location is the host cytoplasm. The protein localises to the host cytoskeleton. It is found in the virion. The protein resides in the host cell membrane. Small multifunctional phosphoprotein involved in virion morphogenesis, egress and counteracting host innate immunity. Plays critical roles in the final steps of viral release by interacting with host TSG101, a member of the vacuolar protein-sorting pathway and using other cellular host proteins involved in vesicle formation pathway. Also acts as a viroporin and forms ion conductive pores allowing viral particle release. Impairs the generation of type I interferon by down-regulating host TLR3 and TLR7 as well as their downstream signaling pathways. Down-regulates the phosphorylation of host IRF3 via the interaction with host SIRP-alpha, thereby inhibiting IFN-I expression. Interacts with host microtubules. The protein is Protein ORF3 of Bandicota bengalensis (lesser bandicoot rat).